A 977-amino-acid polypeptide reads, in one-letter code: GAS2-like protein pickled eggs (977 aa).

One can recognise a Calponin-homology (CH) domain in the interval 20-159 (EAMREDLAEW…CLLEVARRGA (140 aa)). The disordered stretch occupies residues 218–245 (VETDLYDDSDDSETEDDGDQNPVLMYGP). Residues 221–236 (DLYDDSDDSETEDDGD) are compositionally biased toward acidic residues. The 73-residue stretch at 252-324 (NDLKSLDEMV…HYLDKHDPCR (73 aa)) folds into the GAR domain. Disordered stretches follow at residues 397 to 543 (PTLQ…SEIS), 557 to 624 (AQKR…VCDG), 666 to 685 (VANT…RSPL), 693 to 803 (IDNS…KGRS), and 910 to 977 (NLER…TELY). Composition is skewed to polar residues over residues 399-428 (LQNG…NQQA) and 436-454 (ATGS…QLLG). Over residues 502-527 (GGSGVGSAAGGVSSGSAGSGVAGEQG) the composition is skewed to gly residues. Polar residues predominate over residues 577–589 (RLDQTSSDSQISP). Residues 601–620 (ILEEEDLNGQDREEDQEDYS) are compositionally biased toward acidic residues. Composition is skewed to polar residues over residues 666–677 (VANTMGNPTPNL) and 731–741 (TRNSTGATTTP). The span at 928-953 (SSAASSCESNNSNAGAGSGAAAGSAS) shows a compositional bias: low complexity.

This sequence belongs to the GAS2 family. As to expression, expressed in the ovary and the ring canals of the germline cells. In larvae, expressed in the notal region of the wing disk.

The protein localises to the cytoplasm. Its subcellular location is the cytoskeleton. It is found in the cell cortex. Its function is as follows. Essential for development and viability. Required for ovary development and oogenesis, and is essential for the development of the indirect flight muscles. May act as a negative regulator of the Notch signaling pathway in certain tissues, such as the muscle precursors and ovaries. May function as a linker protein between the actin and microtubule cytoskeletons. The protein is GAS2-like protein pickled eggs of Drosophila melanogaster (Fruit fly).